Here is a 363-residue protein sequence, read N- to C-terminus: Methyltransferase pynC (363 aa).

S-adenosyl-L-methionine-binding positions include 199 to 200 (GG), Asp225, 254 to 255 (SF), Arg270, and Arg271.

It belongs to the class I-like SAM-binding methyltransferase superfamily. Cation-independent O-methyltransferase family.

It participates in secondary metabolite biosynthesis. Functionally, methyltransferase; part of the gene cluster that mediates the biosynthesis of pyranonigrins, a family of antioxidative compounds. The first step of pyranonigrins biosynthesis is performed by the hybrid PKS-NRPS synthetase that condenses 6 malonyl-CoA units to an acetyl starter unit, to form a 1,3,5-trioxotetradecane-6,8-dienyl-ACP. The enoyl reductase (ER) domain of pynA is likely to be functional during the first two rounds of polyketide chain extension, to generate the saturated C-C bonds of the alkyl side chain. PynA subsequently forms the amide bond between the acyl chain and L-serine. Although pynA has a terminal reductase domain, it appears to require the thioesterase pynI for the release of the straight-chain intermediate from pynA via the formation of a tetramic acid pyranonigrin J. The methyltransferase pynC then coverts pyranonigrin J to pyranonigrin I via N-methylation. The FAD-dependent monooxygenase pynG catalyzes an epoxidation-mediated cyclization to form the dihydro-gamma-pyrone moiety, followed by pynD-catalyzed oxidation of the alcohol to the ketone and enolization to yield the characteristic tetramic acid-fused gamma-pyrone core of pyranonigrin H. Pyranonigrin H is substrate of pynH for dehydration-mediated exo-methylene formation from the serine side chain to produce pyranonigrin E, before the oxidase pynE reduces the exo-methylene of pyranonigrin E into a pendant methyl to form pyranonigrin G. The FAD-linked oxidoreductase pynB performs the reverse reaction and converts pyranonigrin G back to pyranonigrin E. The protein is Methyltransferase pynC of Aspergillus niger (strain ATCC MYA-4892 / CBS 513.88 / FGSC A1513).